Reading from the N-terminus, the 400-residue chain is Enoyl-[acyl-carrier-protein] reductase [NADH] (400 aa).

NAD(+)-binding positions include 48–53 (GSSSGY), 74–75 (FE), 111–112 (DA), and 139–140 (LA). Tyrosine 225 contacts substrate. The Proton donor role is filled by tyrosine 235. NAD(+) contacts are provided by residues lysine 244 and 273-275 (VVT).

Belongs to the TER reductase family. In terms of assembly, monomer.

It catalyses the reaction a 2,3-saturated acyl-[ACP] + NAD(+) = a (2E)-enoyl-[ACP] + NADH + H(+). The protein operates within lipid metabolism; fatty acid biosynthesis. Involved in the final reduction of the elongation cycle of fatty acid synthesis (FAS II). Catalyzes the reduction of a carbon-carbon double bond in an enoyl moiety that is covalently linked to an acyl carrier protein (ACP). This is Enoyl-[acyl-carrier-protein] reductase [NADH] from Shewanella frigidimarina (strain NCIMB 400).